The chain runs to 372 residues: 2,7-anhydro-N-acetylneuraminate hydratase (372 aa).

10 residues coordinate NAD(+): Tyr11, Phe12, Asp33, Asn36, Thr68, Asn70, His73, Glu90, Lys91, and Trp160.

This sequence belongs to the Gfo/Idh/MocA family. In terms of assembly, homodimer. NAD(+) serves as cofactor.

It carries out the reaction N-acetyl-2,7-anhydro-alpha-neuraminate + H2O = N-acetyl-alpha-neuraminate. The catalysed reaction is 2-deoxy-2,3-dehydro-N-acetylneuraminate + H2O = N-acetyl-alpha-neuraminate. Its activity is regulated as follows. All conversions require NAD(+) as a cofactor, which is regenerated in the reaction. The presence of EGTA and several divalent cations does not affect the activity. Functionally, hydratase involved in the degradation of sialic acids. Catalyzes the reversible conversion of the dehydrated form of N-acetylneuraminate (Neu5Ac), 2,7-anhydro-N-acetylneuraminate (2,7-AN), to Neu5Ac. Also catalyzes the irreversible conversion of 2-deoxy-2,3-didehydro-N-acetylneuraminate (2,3-EN) to Neu5Ac. The reaction mechanism involves keto intermediates and the transient formation of NADH. This Escherichia coli (strain K12) protein is 2,7-anhydro-N-acetylneuraminate hydratase.